We begin with the raw amino-acid sequence, 37 residues long: Cytochrome b6-f complex subunit 7 (37 aa).

Residues 11-29 (AVLLMVLVLVGLAWGFLLL) traverse the membrane as a helical segment.

This sequence belongs to the PetM family. As to quaternary structure, the 4 large subunits of the cytochrome b6-f complex are cytochrome b6, subunit IV (17 kDa polypeptide, PetD), cytochrome f and the Rieske protein, while the 4 small subunits are PetG, PetL, PetM and PetN. The complex functions as a dimer.

The protein localises to the cellular thylakoid membrane. Its function is as follows. Component of the cytochrome b6-f complex, which mediates electron transfer between photosystem II (PSII) and photosystem I (PSI), cyclic electron flow around PSI, and state transitions. This chain is Cytochrome b6-f complex subunit 7, found in Rippkaea orientalis (strain PCC 8801 / RF-1) (Cyanothece sp. (strain PCC 8801)).